The following is a 392-amino-acid chain: ATP phosphoribosyltransferase regulatory subunit (392 aa).

The protein belongs to the class-II aminoacyl-tRNA synthetase family. HisZ subfamily. Heteromultimer composed of HisG and HisZ subunits.

The protein resides in the cytoplasm. It participates in amino-acid biosynthesis; L-histidine biosynthesis; L-histidine from 5-phospho-alpha-D-ribose 1-diphosphate: step 1/9. Required for the first step of histidine biosynthesis. May allow the feedback regulation of ATP phosphoribosyltransferase activity by histidine. In Synechococcus sp. (strain WH7803), this protein is ATP phosphoribosyltransferase regulatory subunit.